Here is a 427-residue protein sequence, read N- to C-terminus: Tol-Pal system protein TolB (427 aa).

Positions M1 to A23 are cleaved as a signal peptide.

The protein belongs to the TolB family. As to quaternary structure, the Tol-Pal system is composed of five core proteins: the inner membrane proteins TolA, TolQ and TolR, the periplasmic protein TolB and the outer membrane protein Pal. They form a network linking the inner and outer membranes and the peptidoglycan layer.

It is found in the periplasm. Its function is as follows. Part of the Tol-Pal system, which plays a role in outer membrane invagination during cell division and is important for maintaining outer membrane integrity. This is Tol-Pal system protein TolB from Actinobacillus succinogenes (strain ATCC 55618 / DSM 22257 / CCUG 43843 / 130Z).